Here is a 208-residue protein sequence, read N- to C-terminus: Putative ribosomal protein uS2-like (208 aa).

It belongs to the universal ribosomal protein uS2 family.

The protein localises to the plastid. Its subcellular location is the chloroplast. This chain is Putative ribosomal protein uS2-like (rps2-2), found in Chlamydomonas reinhardtii (Chlamydomonas smithii).